We begin with the raw amino-acid sequence, 247 residues long: MEEQPQMQDADEPADSGGEGRAGGPPQVAGAQAACSEDRMTLLLRLRAQTKQQLLEYKSMVDASEEKTPEQIMQEKQIEAKIEDLENEIEEVKVAFEIKKLALDRMRLSTALKKNLEKISRQSSVLMDNMKHLLELNKLIMKSQQESWDLEEKLLDIRKKRLQLKQASESKLLEIQTEKNKQKIDLDSMENSERIKIIRQNLQMEIKITTVIQHVFQNLILGSKVNWAEDPALKEIVLQLEKNVDMM.

Residue Met-1 is modified to N-acetylmethionine. Acidic residues predominate over residues 1–14; it reads MEEQPQMQDADEPA. Residues 1-34 are disordered; the sequence is MEEQPQMQDADEPADSGGEGRAGGPPQVAGAQAA. Position 16 is a phosphoserine (Ser-16). Over residues 24–34 the composition is skewed to low complexity; that stretch reads GPPQVAGAQAA. Positions 47–192 form a coiled coil; it reads RAQTKQQLLE…KIDLDSMENS (146 aa). A Glycyl lysine isopeptide (Lys-Gly) (interchain with G-Cter in SUMO2) cross-link involves residue Lys-67. Thr-68 carries the post-translational modification Phosphothreonine.

The protein belongs to the CENP-H/MCM16 family. As to quaternary structure, self-associates. Component of the CENPA-NAC complex, at least composed of CENPA, CENPC, CENPH, CENPM, CENPN, CENPT and CENPU. The CENPA-NAC complex interacts with the CENPA-CAD complex, composed of CENPI, CENPK, CENPL, CENPO, CENPP, CENPQ, CENPR and CENPS. Interacts directly with CENPK. Interacts with KIF2C and NDC80. Interacts with TRIM36.

The protein resides in the nucleus. It localises to the chromosome. It is found in the centromere. Its subcellular location is the kinetochore. In terms of biological role, component of the CENPA-NAC (nucleosome-associated) complex, a complex that plays a central role in assembly of kinetochore proteins, mitotic progression and chromosome segregation. The CENPA-NAC complex recruits the CENPA-CAD (nucleosome distal) complex and may be involved in incorporation of newly synthesized CENPA into centromeres. Required for chromosome congression and efficiently align the chromosomes on a metaphase plate. In Homo sapiens (Human), this protein is Centromere protein H.